A 388-amino-acid chain; its full sequence is Succinate--CoA ligase [ADP-forming] subunit beta (388 aa).

In terms of domain architecture, ATP-grasp spans 9–244 (KEILRKYNVP…LDEEDANEIE (236 aa)). ATP-binding positions include lysine 46, 53–55 (GRG), glutamate 99, alanine 102, and glutamate 107. Positions 199 and 213 each coordinate Mg(2+). Residues asparagine 264 and 321–323 (GIM) contribute to the substrate site.

It belongs to the succinate/malate CoA ligase beta subunit family. In terms of assembly, heterotetramer of two alpha and two beta subunits. The cofactor is Mg(2+).

It carries out the reaction succinate + ATP + CoA = succinyl-CoA + ADP + phosphate. The enzyme catalyses GTP + succinate + CoA = succinyl-CoA + GDP + phosphate. Its pathway is carbohydrate metabolism; tricarboxylic acid cycle; succinate from succinyl-CoA (ligase route): step 1/1. Its function is as follows. Succinyl-CoA synthetase functions in the citric acid cycle (TCA), coupling the hydrolysis of succinyl-CoA to the synthesis of either ATP or GTP and thus represents the only step of substrate-level phosphorylation in the TCA. The beta subunit provides nucleotide specificity of the enzyme and binds the substrate succinate, while the binding sites for coenzyme A and phosphate are found in the alpha subunit. The sequence is that of Succinate--CoA ligase [ADP-forming] subunit beta from Cupriavidus taiwanensis (strain DSM 17343 / BCRC 17206 / CCUG 44338 / CIP 107171 / LMG 19424 / R1) (Ralstonia taiwanensis (strain LMG 19424)).